The sequence spans 1253 residues: Myosin heavy chain 95F (1253 aa).

A Myosin N-terminal SH3-like domain is found at 3–54 (EDTQLVWVRDAAEGYIQGRITEIGAKEFEVTPTDRKYPKRTCHFDDIHSSCD). The Myosin motor domain maps to 57 to 766 (QDHDDNCELM…KFVEFDRIMR (710 aa)). ATP is bound at residue 151 to 158 (GESGAGKT). Residues 647 to 666 (GELMEKLEQNGTNFIRCIKP) form an actin-binding region. The IQ domain occupies 808–837 (RNKCVLIAQRIARGFLARKQHRPRYQGIGK). Residues 900–1022 (ANMNKLTVDL…LRLANESNGQ (123 aa)) are a coiled coil. The hydrophobic region stretch occupies residues 1187–1193 (PILLVAG). Positions 1233–1253 (AYKNLGAAKPNGPAAAMQKQQ) are disordered.

It belongs to the TRAFAC class myosin-kinesin ATPase superfamily. Myosin family. Isoform B is present at a higher level in the head and gonads than in the thoraxes. Isoform 145 kDa is found only in the head. CLIP-190 and jar are coexpressed at several times in development and in a number of tissues, including embryonic axonal neuron processes and posterior pole.

It localises to the cytoplasm. The protein resides in the cytoskeleton. Myosin is a protein that binds to actin and has ATPase activity that is activated by actin. Together CLIP-190 and jar may coordinate the interaction between the actin and microtubule cytoskeleton. May link endocytic vesicles to microtubules and may be involved in transport in the early embryo and in the dynamic process of dorsal closure. It is believed that its function changes during the life cycle. The polypeptide is Myosin heavy chain 95F (jar) (Drosophila melanogaster (Fruit fly)).